An 863-amino-acid polypeptide reads, in one-letter code: Facilitated trehalose transporter Tret1 (863 aa).

A disordered region spans residues 1-208; the sequence is MSGRDNRGAG…RIGFQQQKAT (208 aa). The Cytoplasmic segment spans residues 1–398; sequence MSGRDNRGAG…VYRPTTNPIY (398 aa). A compositionally biased stretch (basic and acidic residues) spans 28–46; sequence KLKEKLTRAGEELGYHRVE. A compositionally biased stretch (polar residues) spans 47-59; it reads SNLSASNTGTSLD. Over residues 72–85 the composition is skewed to low complexity; it reads AAPQRHPQQQFPHL. 2 stretches are compositionally biased toward polar residues: residues 114 to 129 and 177 to 187; these read PPQQ…RSSG and KPQQQGNNKAA. 3 positions are modified to phosphoserine: Ser-254, Ser-255, and Ser-256. Residues 286 to 307 form a disordered region; it reads VLQGSSTDSDEEGDDAEHKRLI. Phosphoserine is present on residues Ser-326 and Ser-328. Positions 332-354 are disordered; that stretch reads FLTSRQNFQQQRSISTDSRKSRR. Over residues 336 to 347 the composition is skewed to polar residues; sequence RQNFQQQRSIST. The helical transmembrane segment at 399-419 threads the bilayer; sequence IWTQVLAALSVSLGSLVVGFA. Residues 420-446 lie on the Extracellular side of the membrane; it reads SAYTSPALVSMTNTNLTSFVVTPQAAS. Residue Asn-434 is glycosylated (N-linked (GlcNAc...) asparagine). A helical membrane pass occupies residues 447–467; it reads WVGGIMPLAGLAGGIAGGPFI. Topologically, residues 468–479 are cytoplasmic; sequence EYLGRRNTILAT. A helical membrane pass occupies residues 480–500; it reads AVPFIISWLLIACAVNVVMVL. Residues 501–503 lie on the Extracellular side of the membrane; it reads CGR. The helical transmembrane segment at 504–524 threads the bilayer; the sequence is FLAGFCVGIASLSLPVYLGET. At 525–530 the chain is on the cytoplasmic side; the sequence is VQPEVR. A helical membrane pass occupies residues 531-551; sequence GTLGLLPTAFGNIGILLCFVA. At 552–558 the chain is on the extracellular side; that stretch reads GTYMDWS. Residues 559-579 form a helical membrane-spanning segment; it reads MLAFLGGTLPVPFLILMFLIP. Over 580 to 642 the chain is Cytoplasmic; the sequence is ETPRWYVSRG…ELLKRSNLKP (63 aa). A helical membrane pass occupies residues 643 to 663; that stretch reads LSISLGLMFFQQLSGINAVIF. The Extracellular segment spans residues 664-679; sequence YTVQIFQDAGSTIDGN. A helical membrane pass occupies residues 680–700; that stretch reads VCTIIVGVVNFMATFIATVLI. Residues 701–706 are Cytoplasmic-facing; sequence DRAGRK. A helical membrane pass occupies residues 707–727; it reads ILLYVSNVAMILTLFVLGGFF. At 728-746 the chain is on the extracellular side; it reads YCKSTGMDTSNVGWLPLSC. Residues 747–767 traverse the membrane as a helical segment; it reads FVVYILGFSLGFGPIPWLMMG. Over 768 to 773 the chain is Cytoplasmic; the sequence is EILPAK. A helical membrane pass occupies residues 774–794; it reads IRGSAASVATAFNWSCTFVVT. Over 795-807 the chain is Extracellular; the sequence is KSFQDMIDVMGAH. A helical membrane pass occupies residues 808-828; it reads GAFWMFGAICFVGLFFVIFYV. The Cytoplasmic portion of the chain corresponds to 829-863; the sequence is PETQGKTLEDIERKMMGRVRRMSSVANIKPLSFNM. Phosphoserine occurs at positions 851 and 852.

It belongs to the major facilitator superfamily. Sugar transporter (TC 2.A.1.1) family. Trehalose transporter subfamily.

Its subcellular location is the cell membrane. Functionally, low-capacity facilitative transporter for trehalose. Does not transport maltose, sucrose or lactose. Mediates the bidirectional transfer of trehalose. Responsible for the transport of trehalose synthesized in the fat body and the incorporation of trehalose into other tissues that require a carbon source, thereby regulating trehalose levels in the hemolymph. The sequence is that of Facilitated trehalose transporter Tret1 from Drosophila mojavensis (Fruit fly).